We begin with the raw amino-acid sequence, 170 residues long: MENIVLIGMPLSGKSTLGRELSKILKYDLIDTDTLIEEMEDKSIKEIFKIYGEDYFREKELKIINKLKKESNKVISTGGGLPIYNKNIYELKKIGFTVYLKVPLEELIKRMVKKEYDTRPLLKNNDTKFLEEMYKNRIEIYEKAHTIICNTNYKESLITIVRTYKKWKGI.

Leu-11–Thr-16 contributes to the ATP binding site. Ser-15 contributes to the Mg(2+) binding site. Substrate-binding residues include Asp-33, Arg-57, and Gly-79. Position 119 (Arg-119) interacts with ATP. A substrate-binding site is contributed by Arg-137.

This sequence belongs to the shikimate kinase family. Monomer. Mg(2+) is required as a cofactor.

The protein resides in the cytoplasm. The enzyme catalyses shikimate + ATP = 3-phosphoshikimate + ADP + H(+). It participates in metabolic intermediate biosynthesis; chorismate biosynthesis; chorismate from D-erythrose 4-phosphate and phosphoenolpyruvate: step 5/7. In terms of biological role, catalyzes the specific phosphorylation of the 3-hydroxyl group of shikimic acid using ATP as a cosubstrate. The chain is Shikimate kinase from Clostridium botulinum (strain Kyoto / Type A2).